Here is a 100-residue protein sequence, read N- to C-terminus: MATIADPRDIILAPVISEKSYSLIEDNVYTFIVHPDSNKTQIKIAIEQIFSVKVSSVNTANRQGKRKRTRTGFGQRKSTKRAIVTLAPGSKPIDLFGAPA.

It belongs to the universal ribosomal protein uL23 family. Part of the 50S ribosomal subunit. Contacts protein L29, and trigger factor when it is bound to the ribosome.

Functionally, one of the early assembly proteins it binds 23S rRNA. One of the proteins that surrounds the polypeptide exit tunnel on the outside of the ribosome. Forms the main docking site for trigger factor binding to the ribosome. This is Large ribosomal subunit protein uL23 from Mycobacteroides abscessus (strain ATCC 19977 / DSM 44196 / CCUG 20993 / CIP 104536 / JCM 13569 / NCTC 13031 / TMC 1543 / L948) (Mycobacterium abscessus).